The sequence spans 261 residues: Putative [LysW]-aminoadipate/[LysW]-glutamate kinase (261 aa).

Substrate-binding positions include Gly-35–Gly-36, Arg-62, and Asn-162.

It belongs to the acetylglutamate kinase family. LysZ subfamily.

It is found in the cytoplasm. The enzyme catalyses [amino-group carrier protein]-C-terminal-N-(1,4-dicarboxybutan-1-yl)-L-glutamine + ATP = [amino-group carrier protein]-C-terminal-N-(1-carboxy-5-phosphooxy-5-oxopentan-1-yl)-L-glutamine + ADP. The catalysed reaction is [amino-group carrier protein]-C-terminal-gamma-(L-glutamyl)-L-glutamate + ATP = [amino-group carrier protein]-C-terminal-gamma-(5-phospho-L-glutamyl)-L-glutamate + ADP. Its pathway is amino-acid biosynthesis; L-lysine biosynthesis via AAA pathway; L-lysine from L-alpha-aminoadipate (Thermus route): step 2/5. It functions in the pathway amino-acid biosynthesis; L-arginine biosynthesis. Its function is as follows. Involved in both the arginine and lysine biosynthetic pathways. Phosphorylates the LysW-bound precursors glutamate (for arginine biosynthesis), respectively alpha-aminoadipate (for lysine biosynthesis). In Pyrobaculum islandicum (strain DSM 4184 / JCM 9189 / GEO3), this protein is Putative [LysW]-aminoadipate/[LysW]-glutamate kinase.